Here is a 149-residue protein sequence, read N- to C-terminus: Ribonuclease HI (149 aa).

Residues methionine 1–arginine 142 form the RNase H type-1 domain. Residues aspartate 10, glutamate 48, aspartate 70, and aspartate 134 each contribute to the Mg(2+) site.

It belongs to the RNase H family. In terms of assembly, monomer. It depends on Mg(2+) as a cofactor.

The protein resides in the cytoplasm. The enzyme catalyses Endonucleolytic cleavage to 5'-phosphomonoester.. Endonuclease that specifically degrades the RNA of RNA-DNA hybrids. The sequence is that of Ribonuclease HI from Caulobacter vibrioides (strain ATCC 19089 / CIP 103742 / CB 15) (Caulobacter crescentus).